The primary structure comprises 376 residues: Queuine tRNA-ribosyltransferase (376 aa).

The Proton acceptor role is filled by aspartate 93. Residues 93 to 97, aspartate 147, glutamine 190, and glycine 217 contribute to the substrate site; that span reads DSGGF. Positions 248-254 are RNA binding; that stretch reads GVGTPDD. The active-site Nucleophile is aspartate 267. Residues 272-276 are RNA binding; important for wobble base 34 recognition; that stretch reads TRAGR.

Belongs to the queuine tRNA-ribosyltransferase family. As to quaternary structure, homodimer. Within each dimer, one monomer is responsible for RNA recognition and catalysis, while the other monomer binds to the replacement base PreQ1.

It catalyses the reaction 7-aminomethyl-7-carbaguanine + guanosine(34) in tRNA = 7-aminomethyl-7-carbaguanosine(34) in tRNA + guanine. Its pathway is tRNA modification; tRNA-queuosine biosynthesis. Catalyzes the base-exchange of a guanine (G) residue with the queuine precursor 7-aminomethyl-7-deazaguanine (PreQ1) at position 34 (anticodon wobble position) in tRNAs with GU(N) anticodons (tRNA-Asp, -Asn, -His and -Tyr). Catalysis occurs through a double-displacement mechanism. The nucleophile active site attacks the C1' of nucleotide 34 to detach the guanine base from the RNA, forming a covalent enzyme-RNA intermediate. The proton acceptor active site deprotonates the incoming PreQ1, allowing a nucleophilic attack on the C1' of the ribose to form the product. After dissociation, two additional enzymatic reactions on the tRNA convert PreQ1 to queuine (Q), resulting in the hypermodified nucleoside queuosine (7-(((4,5-cis-dihydroxy-2-cyclopenten-1-yl)amino)methyl)-7-deazaguanosine). This is Queuine tRNA-ribosyltransferase from Mesorhizobium japonicum (strain LMG 29417 / CECT 9101 / MAFF 303099) (Mesorhizobium loti (strain MAFF 303099)).